Reading from the N-terminus, the 545-residue chain is CTP synthase (545 aa).

The amidoligase domain stretch occupies residues 1–266 (MTTNYIFVTG…DDYICKRFSL (266 aa)). S14 contributes to the CTP binding site. Residue S14 participates in UTP binding. Residues 15–20 (SLGKGI) and D72 each bind ATP. Mg(2+) contacts are provided by D72 and E140. CTP is bound by residues 147-149 (DIE), 187-192 (KTKPTQ), and K223. Residues 187–192 (KTKPTQ) and K223 each bind UTP. 239-241 (KDV) serves as a coordination point for ATP. The Glutamine amidotransferase type-1 domain occupies 291–542 (TIGMVGKYIE…VKAANEHQKR (252 aa)). G352 lines the L-glutamine pocket. Catalysis depends on C379, which acts as the Nucleophile; for glutamine hydrolysis. Residues 380–383 (LGMQ), E403, and R470 contribute to the L-glutamine site. Active-site residues include H515 and E517.

It belongs to the CTP synthase family. In terms of assembly, homotetramer.

It catalyses the reaction UTP + L-glutamine + ATP + H2O = CTP + L-glutamate + ADP + phosphate + 2 H(+). The catalysed reaction is L-glutamine + H2O = L-glutamate + NH4(+). It carries out the reaction UTP + NH4(+) + ATP = CTP + ADP + phosphate + 2 H(+). It functions in the pathway pyrimidine metabolism; CTP biosynthesis via de novo pathway; CTP from UDP: step 2/2. Allosterically activated by GTP, when glutamine is the substrate; GTP has no effect on the reaction when ammonia is the substrate. The allosteric effector GTP functions by stabilizing the protein conformation that binds the tetrahedral intermediate(s) formed during glutamine hydrolysis. Inhibited by the product CTP, via allosteric rather than competitive inhibition. In terms of biological role, catalyzes the ATP-dependent amination of UTP to CTP with either L-glutamine or ammonia as the source of nitrogen. Regulates intracellular CTP levels through interactions with the four ribonucleotide triphosphates. The protein is CTP synthase of Salmonella newport (strain SL254).